Reading from the N-terminus, the 561-residue chain is DNA ligase B (561 aa).

Lys125 functions as the N6-AMP-lysine intermediate in the catalytic mechanism.

Belongs to the NAD-dependent DNA ligase family. LigB subfamily.

The catalysed reaction is NAD(+) + (deoxyribonucleotide)n-3'-hydroxyl + 5'-phospho-(deoxyribonucleotide)m = (deoxyribonucleotide)n+m + AMP + beta-nicotinamide D-nucleotide.. Its function is as follows. Catalyzes the formation of phosphodiester linkages between 5'-phosphoryl and 3'-hydroxyl groups in double-stranded DNA using NAD as a coenzyme and as the energy source for the reaction. The sequence is that of DNA ligase B from Salmonella paratyphi A (strain AKU_12601).